The sequence spans 348 residues: UDP-3-O-acylglucosamine N-acyltransferase (348 aa).

Histidine 237 (proton acceptor) is an active-site residue.

This sequence belongs to the transferase hexapeptide repeat family. LpxD subfamily. Homotrimer.

The enzyme catalyses a UDP-3-O-[(3R)-3-hydroxyacyl]-alpha-D-glucosamine + a (3R)-hydroxyacyl-[ACP] = a UDP-2-N,3-O-bis[(3R)-3-hydroxyacyl]-alpha-D-glucosamine + holo-[ACP] + H(+). Its pathway is bacterial outer membrane biogenesis; LPS lipid A biosynthesis. Functionally, catalyzes the N-acylation of UDP-3-O-acylglucosamine using 3-hydroxyacyl-ACP as the acyl donor. Is involved in the biosynthesis of lipid A, a phosphorylated glycolipid that anchors the lipopolysaccharide to the outer membrane of the cell. This Geotalea daltonii (strain DSM 22248 / JCM 15807 / FRC-32) (Geobacter daltonii) protein is UDP-3-O-acylglucosamine N-acyltransferase.